The chain runs to 200 residues: MANILLLDNIDSFTYNLVEQLRNQKNNVLVYRNTVSIDIIFNSLKKLTHPILMLSPGPSLPKHAGCMLDLIKKVKGDIPIVGICLGHQAIVEAYGGIIGYAGEIFHGKASLIRHDGLEMFEGVPQPLPVARYHSLICNKIPEKFVINSYFEKMIMSVRNNCDRVCGFQFHPESILTTHGDQILEKIIHWASLKYITNKKQ.

The Glutamine amidotransferase type-1 domain maps to 3 to 196; sequence NILLLDNIDS…IHWASLKYIT (194 aa). An L-glutamine-binding site is contributed by 57 to 59; it reads GPS. The active-site Nucleophile; for GATase activity is C84. L-glutamine contacts are provided by residues Q88 and 134 to 135; that span reads SL. Active-site for GATase activity residues include H170 and E172.

As to quaternary structure, heterotetramer consisting of two non-identical subunits: a beta subunit (TrpG) and a large alpha subunit (TrpE).

The catalysed reaction is chorismate + L-glutamine = anthranilate + pyruvate + L-glutamate + H(+). It participates in amino-acid biosynthesis; L-tryptophan biosynthesis; L-tryptophan from chorismate: step 1/5. In terms of biological role, part of a heterotetrameric complex that catalyzes the two-step biosynthesis of anthranilate, an intermediate in the biosynthesis of L-tryptophan. In the first step, the glutamine-binding beta subunit (TrpG) of anthranilate synthase (AS) provides the glutamine amidotransferase activity which generates ammonia as a substrate that, along with chorismate, is used in the second step, catalyzed by the large alpha subunit of AS (TrpE) to produce anthranilate. In the absence of TrpG, TrpE can synthesize anthranilate directly from chorismate and high concentrations of ammonia. The chain is Anthranilate synthase component 2 (trpG) from Buchnera aphidicola subsp. Acyrthosiphon pisum (strain APS) (Acyrthosiphon pisum symbiotic bacterium).